The following is a 507-amino-acid chain: Alkyl hydroperoxide reductase subunit F (507 aa).

D207–I222 provides a ligand contact to FAD. Residues C335 and C338 are joined by a disulfide bond. D347 to A361 lines the NAD(+) pocket. An FAD-binding site is contributed by T467 to D477.

The protein belongs to the class-II pyridine nucleotide-disulfide oxidoreductase family. In terms of assembly, homodimer. The cofactor is FAD.

Serves to protect the cell against DNA damage by alkyl hydroperoxides. It can use either NADH or NADPH as electron donor for direct reduction of redox dyes or of alkyl hydroperoxides when combined with the AhpC protein. In Staphylococcus epidermidis (strain ATCC 35984 / DSM 28319 / BCRC 17069 / CCUG 31568 / BM 3577 / RP62A), this protein is Alkyl hydroperoxide reductase subunit F (ahpF).